The following is a 261-amino-acid chain: MASTKDRENFVYIAKLAEQAERYEEMVDSMKNVANLDVELTIEERNLLSVGYKNVIGARRASWRILSSIEQKEESKGNDVNAKRIKEYRHKVETELSNICIDVMRVIDEHLIPSAAAGESTVFYYKMKGDYYRYLAEFKTGNEKKEAGDQSMKAYESATTAAEAELPPTHPIRLGLALNFSVFYYEILNSPERACHLAKQAFDEAISELDTLNEESYKDSTLIMQLLRDNLTLWTSDIPEDGEDSQKANGTAKFGGGDDAE.

A disordered region spans residues 237 to 261 (DIPEDGEDSQKANGTAKFGGGDDAE).

Belongs to the 14-3-3 family.

The polypeptide is 14-3-3-like protein B (Vicia faba (Broad bean)).